Consider the following 551-residue polypeptide: Solute carrier family 22 member 27 (551 aa).

The Cytoplasmic portion of the chain corresponds to 1–15; the sequence is MSFQELLNQVGSLGR. The helical transmembrane segment at 16 to 36 threads the bilayer; it reads FQILQIVFLLLLNAIVVPHIA. Residues 37–145 lie on the Extracellular side of the membrane; that stretch reads MENFTAAIPN…DLVCESQALN (109 aa). N-linked (GlcNAc...) asparagine glycosylation is found at Asn-39, Asn-56, Asn-62, Asn-102, and Asn-107. Residues 146–166 form a helical membrane-spanning segment; the sequence is SVTKFSFMIGLFIGGIICGHL. The Cytoplasmic segment spans residues 167–173; the sequence is SDRLGRK. A helical membrane pass occupies residues 174-194; it reads FILTCALLQFAITETCVAFAP. The Extracellular portion of the chain corresponds to 195–203; it reads SFFIYCSLR. Residues 204-224 traverse the membrane as a helical segment; sequence FLAGLSVEPILVNSHLLMLEW. The Cytoplasmic segment spans residues 225–234; the sequence is TSPKFLTMMA. A helical transmembrane segment spans residues 235–255; it reads ALLSCAPNIGYMISAGLAFLF. Over 256–258 the chain is Extracellular; the sequence is RIW. A helical membrane pass occupies residues 259–279; that stretch reads HHLQLTMSVPIFFFLILTRWL. The Cytoplasmic segment spans residues 280–348; it reads SESARWLIVT…LFHTSILRKR (69 aa). Residues 349–369 form a helical membrane-spanning segment; it reads ICVLSFMRLFFTVSIFGLAVH. Residues 370–376 are Extracellular-facing; that stretch reads LQHLSSN. A helical transmembrane segment spans residues 377–397; that stretch reads IILLQFLISALAILVSVIGPF. At 398-405 the chain is on the cytoplasmic side; it reads VLNHIGRR. The helical transmembrane segment at 406 to 426 threads the bilayer; the sequence is ITYLVLMSLRGIFILIAVFVP. Over 427 to 432 the chain is Extracellular; that stretch reads QEMQTL. Residues 433 to 453 form a helical membrane-spanning segment; that stretch reads RIIMATLAEGISSLCVGVSRL. Topologically, residues 454–467 are cytoplasmic; it reads HTNELLPTTLRATA. Residues 468–488 form a helical membrane-spanning segment; the sequence is VGVIGFFGNSGSFLSPLFMLL. Residues 489–494 lie on the Extracellular side of the membrane; sequence ATYYAN. Residues 495–515 form a helical membrane-spanning segment; that stretch reads MPWIFYGGFSIFNAFTVFLLP. Residues 516 to 551 are Cytoplasmic-facing; that stretch reads ETKNQPLPDSTHDVGNDWKESRKGKKEDPIIKVTRF. The disordered stretch occupies residues 523–551; the sequence is PDSTHDVGNDWKESRKGKKEDPIIKVTRF. Residues 525-545 are compositionally biased toward basic and acidic residues; sequence STHDVGNDWKESRKGKKEDPI.

It belongs to the major facilitator (TC 2.A.1) superfamily. Organic cation transporter (TC 2.A.1.19) family. As to expression, expressed in proximal kidney tubules, and in liver hepatocytes (at protein level).

The protein localises to the cell membrane. Its function is as follows. Does not appear to have transporter activity. Sodium-independent organic anion transporter which exhibits high specificity for L-carnitine. Can also transport salicylic acid and the drug cimetidine. This is Solute carrier family 22 member 27 from Mus musculus (Mouse).